Consider the following 325-residue polypeptide: Malate dehydrogenase (325 aa).

G11 to A17 lines the NAD(+) pocket. Residues R92 and R98 each coordinate substrate. NAD(+)-binding positions include N105, Q112, and V129–N131. Substrate-binding residues include N131 and R162. The Proton acceptor role is filled by H187.

This sequence belongs to the LDH/MDH superfamily. MDH type 2 family.

The catalysed reaction is (S)-malate + NAD(+) = oxaloacetate + NADH + H(+). Functionally, catalyzes the reversible oxidation of malate to oxaloacetate. In Methylococcus capsulatus (strain ATCC 33009 / NCIMB 11132 / Bath), this protein is Malate dehydrogenase.